Consider the following 177-residue polypeptide: Large ribosomal subunit protein uL6 (177 aa).

Belongs to the universal ribosomal protein uL6 family. As to quaternary structure, part of the 50S ribosomal subunit.

In terms of biological role, this protein binds to the 23S rRNA, and is important in its secondary structure. It is located near the subunit interface in the base of the L7/L12 stalk, and near the tRNA binding site of the peptidyltransferase center. This is Large ribosomal subunit protein uL6 from Bordetella petrii (strain ATCC BAA-461 / DSM 12804 / CCUG 43448).